A 121-amino-acid chain; its full sequence is Nitrogen fixation nifHD region glnB-like protein 2 (121 aa).

The protein belongs to the P(II) protein family.

In terms of biological role, could be involved in the regulation of nitrogen fixation. The chain is Nitrogen fixation nifHD region glnB-like protein 2 (glnBII) from Methanococcus maripaludis (Methanococcus deltae).